We begin with the raw amino-acid sequence, 118 residues long: DNA-directed RNA polymerase subunit omega (118 aa).

The interval 78–104 (DEPEEDSMAMLMGGGQPDKPAEDDMSE) is disordered.

This sequence belongs to the RNA polymerase subunit omega family. As to quaternary structure, the RNAP catalytic core consists of 2 alpha, 1 beta, 1 beta' and 1 omega subunit. When a sigma factor is associated with the core the holoenzyme is formed, which can initiate transcription.

The catalysed reaction is RNA(n) + a ribonucleoside 5'-triphosphate = RNA(n+1) + diphosphate. Promotes RNA polymerase assembly. Latches the N- and C-terminal regions of the beta' subunit thereby facilitating its interaction with the beta and alpha subunits. The protein is DNA-directed RNA polymerase subunit omega of Dinoroseobacter shibae (strain DSM 16493 / NCIMB 14021 / DFL 12).